The primary structure comprises 887 residues: MINTSPLLNYVSSHHDIKAINQWRTDVEKQLQDSYENGQSIREIIKARSDLVDEALVFLWKHAELDQSKLGLFAVGGYGRREMLPYSDVDIMILSEDEISEENEKRISTFISSLWDVGNFKPGISVRTIQSCVEQAATDLTVATTLIEARLITGNTQLAKWPRRIVSQTWTDKTFYDAKMAEQAKRYHQHNNTESNLEPDIKNAPGGIRDINQIGWIAKRHFRVNRIYDLVHLGFISEFELAVLEEAESFLWEIRHHLHRLAKRDENRLLFDHQREIAAKFGYVRQEGQPVNYGVEQFMKRYYRTAQQVSTLNEMLLAYFSESVITPRLPNYERKIEVVNDHFKIVDNKLAVQHHKIFAEHPSAILELFYILANRPDIEGIRARTLRLLILAAKRINQSYRDNPEHQALFMSIIRSPYRLYDTLVAMKRYGVLGNYIPAFAQIMGLMQYDLFHIYTVDAHTLLLLRNLNRFREPEFAKEFPVVSSVFQRLARQDIVFIAALFHDIAKGRGGDHSELGAEDAIEFGRAHGFTERECKLIAWLIQNHLLMSLTAQKKDISDPDVVKDFAEKLGDMEHLDYLYTLTVADINATNPKLWNTWRASLMRQLYTHARDVIRTGLGRPVDYQMLIEDTKFAASELLVNNFALADVEKVWQELGDEYFIKESADEIAWHTQAILKHGDNPEPLVLLRAHRKAAQDAVQIFIYTRDQPNLFATTVAVLDRMNLDVQDAKIITASTAFSLDTYVVLDRFGTLLTDPEREETVKNALVKALSQPDQYPGLMQRRIPRQLRHFDIENTVDVTLNEALQQNMVEISTLDHPGLLARVGGLFMMQGLDIHSARIATLGERAEDIFFVTKKDGKPLNNEEVKLFSEKLKAALDEASNQICQH.

Positions 1-337 (MINTSPLLNY…RLPNYERKIE (337 aa)) are uridylyltransferase. The segment at 339-699 (VNDHFKIVDN…AHRKAAQDAV (361 aa)) is uridylyl-removing. In terms of domain architecture, HD spans 457–579 (VDAHTLLLLR…LGDMEHLDYL (123 aa)). ACT domains are found at residues 700-782 (QIFI…LMQR) and 809-887 (MVEI…ICQH).

Belongs to the GlnD family. The cofactor is Mg(2+).

The enzyme catalyses [protein-PII]-L-tyrosine + UTP = [protein-PII]-uridylyl-L-tyrosine + diphosphate. The catalysed reaction is [protein-PII]-uridylyl-L-tyrosine + H2O = [protein-PII]-L-tyrosine + UMP + H(+). With respect to regulation, uridylyltransferase (UTase) activity is inhibited by glutamine, while glutamine activates uridylyl-removing (UR) activity. In terms of biological role, modifies, by uridylylation and deuridylylation, the PII regulatory proteins (GlnB and homologs), in response to the nitrogen status of the cell that GlnD senses through the glutamine level. Under low glutamine levels, catalyzes the conversion of the PII proteins and UTP to PII-UMP and PPi, while under higher glutamine levels, GlnD hydrolyzes PII-UMP to PII and UMP (deuridylylation). Thus, controls uridylylation state and activity of the PII proteins, and plays an important role in the regulation of nitrogen assimilation and metabolism. The chain is Bifunctional uridylyltransferase/uridylyl-removing enzyme from Acinetobacter baumannii (strain ACICU).